The primary structure comprises 594 residues: Keratin, type II cytoskeletal 2 oral (594 aa).

Residues 1 to 164 form a head region; that stretch reads MSRQACKKSF…DPQIGQVKAQ (164 aa). Omega-N-methylarginine occurs at positions 85 and 104. Positions 165 to 200 are coil 1A; it reads EREQIKTLNNKFASFIDKVRFLEQQNKVLETKWELL. An IF rod domain is found at 165–480; it reads EREQIKTLNN…KLLEGEECRL (316 aa). A linker 1 region spans residues 201 to 221; it reads QQQTIRSGSGPQNLEPFFESY. The segment at 222 to 313 is coil 1B; it reads ISCLRKQLDS…TLYDMELSQI (92 aa). The linker 12 stretch occupies residues 314-337; the sequence is QSHVSDTSVVLSMDNNRCLDLDSI. A coil 2 region spans residues 338–476; that stretch reads IAEVKAQYED…ATYRKLLEGE (139 aa). Residues 477–594 are tail; it reads ECRLSGEFQN…TTSSSQQRSK (118 aa). Positions 497-594 are disordered; the sequence is TSTSSSGSFR…TTSSSQQRSK (98 aa). A compositionally biased stretch (gly residues) spans 506–522; sequence RGTGGSNYGGDSSGRSG. Residues 523 to 551 are compositionally biased toward low complexity; that stretch reads GSSSSSSRGSSSRGSSGSRLGSGGSISVS. At Arg-541 the chain carries Omega-N-methylarginine. Positions 552–564 are enriched in polar residues; sequence QQRMGFNSGGSQT. Residues 565 to 594 are compositionally biased toward low complexity; that stretch reads SVGSSYKSGRGGSSSVQFSQTTSSSQQRSK.

This sequence belongs to the intermediate filament family. In terms of assembly, heterotetramer of two type I and two type II keratins.

Functionally, probably contributes to terminal cornification. This is Keratin, type II cytoskeletal 2 oral from Mus musculus (Mouse).